We begin with the raw amino-acid sequence, 485 residues long: tRNA sulfurtransferase (485 aa).

One can recognise a THUMP domain in the interval 61–165 (EELIALLQRI…DDKMMLVKAR (105 aa)). Residues 183–184 (LI), Lys-265, Gly-287, and Gln-296 contribute to the ATP site. An intrachain disulfide couples Cys-344 to Cys-456. The Rhodanese domain maps to 404–483 (LGENEVILDI…FSNVRVFAKN (80 aa)). Cys-456 serves as the catalytic Cysteine persulfide intermediate.

It belongs to the ThiI family.

It is found in the cytoplasm. It catalyses the reaction [ThiI sulfur-carrier protein]-S-sulfanyl-L-cysteine + a uridine in tRNA + 2 reduced [2Fe-2S]-[ferredoxin] + ATP + H(+) = [ThiI sulfur-carrier protein]-L-cysteine + a 4-thiouridine in tRNA + 2 oxidized [2Fe-2S]-[ferredoxin] + AMP + diphosphate. The catalysed reaction is [ThiS sulfur-carrier protein]-C-terminal Gly-Gly-AMP + S-sulfanyl-L-cysteinyl-[cysteine desulfurase] + AH2 = [ThiS sulfur-carrier protein]-C-terminal-Gly-aminoethanethioate + L-cysteinyl-[cysteine desulfurase] + A + AMP + 2 H(+). It participates in cofactor biosynthesis; thiamine diphosphate biosynthesis. Functionally, catalyzes the ATP-dependent transfer of a sulfur to tRNA to produce 4-thiouridine in position 8 of tRNAs, which functions as a near-UV photosensor. Also catalyzes the transfer of sulfur to the sulfur carrier protein ThiS, forming ThiS-thiocarboxylate. This is a step in the synthesis of thiazole, in the thiamine biosynthesis pathway. The sulfur is donated as persulfide by IscS. This is tRNA sulfurtransferase from Haemophilus influenzae (strain PittGG).